A 389-amino-acid chain; its full sequence is Endonuclease 8-like 1 (389 aa).

The Schiff-base intermediate with DNA role is filled by Pro-2. The active-site Proton donor is the Glu-3. Catalysis depends on Lys-54, which acts as the Proton donor; for beta-elimination activity. Asn-176 lines the DNA pocket. The interval 278–389 is disordered; the sequence is TIWFQGDPGP…PREAGESSAS (112 aa). A compositionally biased stretch (basic residues) spans 322–333; that stretch reads SRMRRARKHPPK. Over residues 336–351 the composition is skewed to polar residues; sequence AQQSEGAGLQQNQETP. Positions 357–373 are enriched in basic residues; sequence GKRRGQRASTGHRRRPK. Over residues 374–389 the composition is skewed to basic and acidic residues; that stretch reads TIPDTRPREAGESSAS.

It belongs to the FPG family. As to expression, detected in heart, spleen and lung.

The protein localises to the cytoplasm. The protein resides in the cytoskeleton. Its subcellular location is the microtubule organizing center. It localises to the centrosome. It is found in the nucleus. The protein localises to the chromosome. It carries out the reaction 2'-deoxyribonucleotide-(2'-deoxyribose 5'-phosphate)-2'-deoxyribonucleotide-DNA = a 3'-end 2'-deoxyribonucleotide-(2,3-dehydro-2,3-deoxyribose 5'-phosphate)-DNA + a 5'-end 5'-phospho-2'-deoxyribonucleoside-DNA + H(+). Functionally, involved in base excision repair of DNA damaged by oxidation or by mutagenic agents. Acts as a DNA glycosylase that recognizes and removes damaged bases. Has a preference for oxidized pyrimidines, such as thymine glycol, formamidopyrimidine (Fapy) and 5-hydroxyuracil. Has marginal activity towards 8-oxoguanine. Has AP (apurinic/apyrimidinic) lyase activity and introduces nicks in the DNA strand. Cleaves the DNA backbone by beta-delta elimination to generate a single-strand break at the site of the removed base with both 3'- and 5'-phosphates. Has DNA glycosylase/lyase activity towards mismatched uracil and thymine, in particular in U:C and T:C mismatches. Specifically binds 5-hydroxymethylcytosine (5hmC), suggesting that it acts as a specific reader of 5hmC. The protein is Endonuclease 8-like 1 (Neil1) of Mus musculus (Mouse).